The primary structure comprises 50 residues: Small nuclear ribonucleoprotein Sm D2 (50 aa).

The segment at 1–36 is disordered; that stretch reads MSLLNKPKSEMTPEELQKREEEEFNTGPLSVXTQSX. N-acetylserine is present on Ser2. Residues Lys6 and Lys8 each participate in a glycyl lysine isopeptide (Lys-Gly) (interchain with G-Cter in SUMO2) cross-link. Over residues 7–21 the composition is skewed to basic and acidic residues; sequence PKSEMTPEELQKREE. Ser9 carries the post-translational modification Phosphoserine. Thr12 carries the phosphothreonine modification.

Belongs to the snRNP core protein family. Core component of the spliceosomal U1, U2, U4 and U5 small nuclear ribonucleoproteins (snRNPs), the building blocks of the spliceosome. Most spliceosomal snRNPs contain a common set of Sm proteins, SNRPB, SNRPD1, SNRPD2, SNRPD3, SNRPE, SNRPF and SNRPG that assemble in a heptameric protein ring on the Sm site of the small nuclear RNA to form the core snRNP. Component of the U1 snRNP. The U1 snRNP is composed of the U1 snRNA and the 7 core Sm proteins SNRPB, SNRPD1, SNRPD2, SNRPD3, SNRPE, SNRPF and SNRPG, and at least three U1 snRNP-specific proteins SNRNP70/U1-70K, SNRPA/U1-A and SNRPC/U1-C. Component of the U4/U6-U5 tri-snRNP complex composed of the U4, U6 and U5 snRNAs and at least PRPF3, PRPF4, PRPF6, PRPF8, PRPF31, SNRNP200, TXNL4A, SNRNP40, SNRPB, SNRPD1, SNRPD2, SNRPD3, SNRPE, SNRPF, SNRPG, DDX23, CD2BP2, PPIH, SNU13, EFTUD2, SART1 and USP39, plus LSM2, LSM3, LSM4, LSM5, LSM6, LSM7 and LSM8. Component of the minor spliceosome, which splices U12-type introns. Part of the SMN-Sm complex that contains SMN1, GEMIN2/SIP1, DDX20/GEMIN3, GEMIN4, GEMIN5, GEMIN6, GEMIN7, GEMIN8, STRAP/UNRIP and the Sm proteins SNRPB, SNRPD1, SNRPD2, SNRPD3, SNRPE, SNRPF and SNRPG; catalyzes core snRNPs assembly. Forms a 6S pICln-Sm complex composed of CLNS1A/pICln, SNRPD1, SNRPD2, SNRPE, SNRPF and SNRPG; ring-like structure where CLNS1A/pICln mimics additional Sm proteins and which is unable to assemble into the core snRNP. Interacts with SMN1; the interaction is direct. Interacts with GEMIN2; the interaction is direct. Interacts with SNRPD1; the interaction is direct. Interacts with SNRPF; the interaction is direct.

The protein localises to the cytoplasm. The protein resides in the cytosol. Its subcellular location is the nucleus. Plays a role in pre-mRNA splicing as a core component of the spliceosomal U1, U2, U4 and U5 small nuclear ribonucleoproteins (snRNPs), the building blocks of the spliceosome. Component of both the pre-catalytic spliceosome B complex and activated spliceosome C complexes. As a component of the minor spliceosome, involved in the splicing of U12-type introns in pre-mRNAs. This Sus scrofa (Pig) protein is Small nuclear ribonucleoprotein Sm D2 (SNRPD2).